The primary structure comprises 27 residues: Snake venom serine protease Afaacytin alpha/beta/beta' chains (27 aa).

In terms of domain architecture, Peptidase S1 spans 1–27; the sequence is VIGGAECNINEHRSLVLLYXSSSXFGE.

It belongs to the peptidase S1 family. Snake venom subfamily. Heterodimer of an alpha and a beta chain. Subunit beta is constituted of two disulfide-linked polypeptidic chains, beta and beta'. Calcium appears to be required for structural cohesion of the molecule. In terms of processing, both chains alpha and beta are N-glycosylated. As to expression, expressed by the venom gland.

The protein localises to the secreted. With respect to regulation, inhibited by diisopropylfluorophosphate (DFP), benzamidine, heparin and hirudin, but not by plasmatic thrombin inhibitors, antithrombin-III and ecotin. In terms of biological role, snake venom serine protease that exhibits alpha-fibrinase and beta-fibrinogenase activities. It replaces missing factors VIII (F8) and IX (F9) in deficient plasmas by activating purified human factor X (F10) into factor Xa. It releases serotonin from platelets and induces platelet aggregation in human (but not in rabbit). Has caseinolytic, arginine-esterase and amidase activities. This is Snake venom serine protease Afaacytin alpha/beta/beta' chains from Cerastes cerastes (Horned desert viper).